Reading from the N-terminus, the 91-residue chain is Salivary lectin pathway inhibitor (91 aa).

A signal peptide spans 1–21; it reads MGLTETTLVLVSLAFFASAVA. Asparagine 26 and asparagine 87 each carry an N-linked (GlcNAc...) asparagine glycan.

It belongs to the salp14 family. Post-translationally, glycosylated; deglycosylation largely abrogates the complement inhibitory effect. In terms of tissue distribution, nymph salivary gland (at protein level). Saliva (at protein level). Not detected in midgut.

Its subcellular location is the secreted. Its function is as follows. Inhibits the lectin pathway of complement system activation in the host by reducing binding of mannose-binding lectin and L-ficolin to their ligands. Does not affect the classical and alternative pathways of complement system activation in the host. (Microbial infection) Protects Borrelia garinii (strain A87S) from host complement-mediated killing by preventing deposition of host C5b-9 membrane attack complexes on the surface of spirochetes. Inhibits phagocytosis of B.garinii (strain A87S) by human neutrophils. Impairs Borrelia-induced complement-mediated chemotaxis of human polymorphonuclear leukocytes. Functionally, (Microbial infection) Protects Borrelia burgdorferi (strain N40), which is resistant to normal human serum, from Borrelia-opsonizing antibody-mediated complement-dependent killing. The polypeptide is Salivary lectin pathway inhibitor (Ixodes scapularis (Black-legged tick)).